Reading from the N-terminus, the 387-residue chain is 3-ketoacyl-CoA thiolase (387 aa).

Cys-91 acts as the Acyl-thioester intermediate in catalysis. Residues His-343 and Cys-373 each act as proton acceptor in the active site.

Belongs to the thiolase-like superfamily. Thiolase family. Heterotetramer of two alpha chains (FadB) and two beta chains (FadA).

The protein resides in the cytoplasm. It carries out the reaction an acyl-CoA + acetyl-CoA = a 3-oxoacyl-CoA + CoA. Its pathway is lipid metabolism; fatty acid beta-oxidation. In terms of biological role, catalyzes the final step of fatty acid oxidation in which acetyl-CoA is released and the CoA ester of a fatty acid two carbons shorter is formed. The protein is 3-ketoacyl-CoA thiolase of Shewanella baltica (strain OS185).